The following is a 396-amino-acid chain: ATP phosphoribosyltransferase regulatory subunit (396 aa).

The protein belongs to the class-II aminoacyl-tRNA synthetase family. HisZ subfamily. Heteromultimer composed of HisG and HisZ subunits.

It is found in the cytoplasm. It participates in amino-acid biosynthesis; L-histidine biosynthesis; L-histidine from 5-phospho-alpha-D-ribose 1-diphosphate: step 1/9. In terms of biological role, required for the first step of histidine biosynthesis. May allow the feedback regulation of ATP phosphoribosyltransferase activity by histidine. This chain is ATP phosphoribosyltransferase regulatory subunit, found in Alkaliphilus metalliredigens (strain QYMF).